A 78-amino-acid chain; its full sequence is Large ribosomal subunit protein uL29 (78 aa).

It belongs to the universal ribosomal protein uL29 family.

The protein is Large ribosomal subunit protein uL29 of Rippkaea orientalis (strain PCC 8801 / RF-1) (Cyanothece sp. (strain PCC 8801)).